The following is a 472-amino-acid chain: MATKCGKCGPGYPSPLEAMKGPREELVYLPCIYRNTGTEAPDYLATVDVNPKSPQYSQVIHRLPMPNLKDELHHSGWNTCSSCFGDSTKSRTKLLLPSLISSRVYVVDVATEPRAPKLHKVVEPEEIHAKCDLSYLHTSHCLASGEVMISALGDPRGNGKGGFVLLDGETFEVKGTWEQPGGAAPMGYDFWYQPRHNVMISTEWAAPNVLRDGFNPADVEAGLYGQHLYVWDWQRHERVQTLTLQDGLIPLEIRFLHNPAADQGFVGCALGSNIQRFYKNQGGTWSVEKVIQVPPKKVKGWILPEMPSLITDILLSLDDRFLYFSNWLHGDLRQYDISDPKRPRLVGQIFLGGSIVKGGPVQVLEDQELKCQPEPLVVKGKRVAGGPQMIQLSLDGTRLYVTTSLYSAWDKQFYPDLIREGSVMLQIDVDTVRGGLKLNPNFLVDFGKEPLGPALAHELRYPGGDCSSDIWL.

Residue A2 is modified to N-acetylalanine. The residue at position 467 (S467) is a Phosphoserine.

This sequence belongs to the selenium-binding protein family. In terms of assembly, interacts with USP33. Post-translationally, the N-terminus is blocked.

Its subcellular location is the nucleus. The protein resides in the cytoplasm. The protein localises to the cytosol. It is found in the membrane. The enzyme catalyses methanethiol + O2 + H2O = hydrogen sulfide + formaldehyde + H2O2 + H(+). The protein operates within organosulfur degradation. In terms of biological role, catalyzes the oxidation of methanethiol, an organosulfur compound known to be produced in substantial amounts by gut bacteria. Selenium-binding protein which may be involved in the sensing of reactive xenobiotics in the cytoplasm. May be involved in intra-Golgi protein transport. The polypeptide is Methanethiol oxidase (SELENBP1) (Bos taurus (Bovine)).